Reading from the N-terminus, the 525-residue chain is GMP synthase [glutamine-hydrolyzing] (525 aa).

A Glutamine amidotransferase type-1 domain is found at Arg-9–Leu-207. Catalysis depends on Cys-86, which acts as the Nucleophile. Catalysis depends on residues His-181 and Glu-183. Positions Trp-208–Arg-400 constitute a GMPS ATP-PPase domain. Ser-235–Ser-241 serves as a coordination point for ATP.

As to quaternary structure, homodimer.

It catalyses the reaction XMP + L-glutamine + ATP + H2O = GMP + L-glutamate + AMP + diphosphate + 2 H(+). The protein operates within purine metabolism; GMP biosynthesis; GMP from XMP (L-Gln route): step 1/1. Functionally, catalyzes the synthesis of GMP from XMP. The polypeptide is GMP synthase [glutamine-hydrolyzing] (Pectobacterium atrosepticum (strain SCRI 1043 / ATCC BAA-672) (Erwinia carotovora subsp. atroseptica)).